The chain runs to 276 residues: Large ribosomal subunit protein uL2 (276 aa).

Residues 223-276 are disordered; sequence GVAMNPVDHPHGGGEGRGKGHHPTSPWGLPTKGYKTRRGKRPSDKFIVRRRNEV. 2 stretches are compositionally biased toward basic and acidic residues: residues 230–240 and 263–276; these read DHPHGGGEGRG and RPSD…RNEV.

The protein belongs to the universal ribosomal protein uL2 family. As to quaternary structure, part of the 50S ribosomal subunit. Forms a bridge to the 30S subunit in the 70S ribosome.

One of the primary rRNA binding proteins. Required for association of the 30S and 50S subunits to form the 70S ribosome, for tRNA binding and peptide bond formation. It has been suggested to have peptidyltransferase activity; this is somewhat controversial. Makes several contacts with the 16S rRNA in the 70S ribosome. This is Large ribosomal subunit protein uL2 from Thermotoga neapolitana (strain ATCC 49049 / DSM 4359 / NBRC 107923 / NS-E).